The following is a 396-amino-acid chain: Putative nickel insertion protein (396 aa).

It belongs to the LarC family.

The chain is Putative nickel insertion protein from Methanosarcina mazei (strain ATCC BAA-159 / DSM 3647 / Goe1 / Go1 / JCM 11833 / OCM 88) (Methanosarcina frisia).